A 400-amino-acid polypeptide reads, in one-letter code: Acetate kinase (400 aa).

Position 7 (Asn7) interacts with Mg(2+). Residue Lys14 coordinates ATP. Residue Arg92 participates in substrate binding. Asp149 acts as the Proton donor/acceptor in catalysis. ATP is bound by residues 209 to 213 (HLGNG), 283 to 285 (DAR), and 331 to 335 (GMGEN). Residue Glu385 coordinates Mg(2+).

This sequence belongs to the acetokinase family. As to quaternary structure, homodimer. It depends on Mg(2+) as a cofactor. Mn(2+) serves as cofactor.

The protein resides in the cytoplasm. The enzyme catalyses acetate + ATP = acetyl phosphate + ADP. It participates in metabolic intermediate biosynthesis; acetyl-CoA biosynthesis; acetyl-CoA from acetate: step 1/2. In terms of biological role, catalyzes the formation of acetyl phosphate from acetate and ATP. Can also catalyze the reverse reaction. This chain is Acetate kinase, found in Helicobacter acinonychis (strain Sheeba).